A 196-amino-acid polypeptide reads, in one-letter code: MMPFSREERQFVYTWLSNMLGHELSASQLAQYQQGLFDDFFAFLTEQGFQAQVEGIQQQLQQLKTVELAHLELAADYTQLFLLDGSSSALPYASVYLPEAQLTCHFTFLEALLVRFQLQLNRDKPEPSDHLCVYLELLRQLAEVDDMKTYRQLIQDALLPWLLPFNDKVQRVKTRTTFYQQVVVLLILLLQADCQN.

The protein belongs to the TorD/DmsD family. TorD subfamily.

It is found in the cytoplasm. Its function is as follows. Involved in the biogenesis of TorA. Acts on TorA before the insertion of the molybdenum cofactor and, as a result, probably favors a conformation of the apoenzyme that is competent for acquiring the cofactor. In Pasteurella multocida (strain Pm70), this protein is Chaperone protein TorD.